Reading from the N-terminus, the 953-residue chain is UvrABC system protein A (953 aa).

33 to 40 serves as a coordination point for ATP; the sequence is GLSGSGKS. ABC transporter domains lie at 320–599 and 619–949; these read WGST…EESI and GHDN…RYLK. Position 652–659 (652–659) interacts with ATP; that stretch reads GVSGSGKS. A C4-type zinc finger spans residues 752-778; that stretch reads CEACQGDGLIKIEMHFLPDVYVKCDIC.

Belongs to the ABC transporter superfamily. UvrA family. In terms of assembly, forms a heterotetramer with UvrB during the search for lesions.

It is found in the cytoplasm. In terms of biological role, the UvrABC repair system catalyzes the recognition and processing of DNA lesions. UvrA is an ATPase and a DNA-binding protein. A damage recognition complex composed of 2 UvrA and 2 UvrB subunits scans DNA for abnormalities. When the presence of a lesion has been verified by UvrB, the UvrA molecules dissociate. The sequence is that of UvrABC system protein A from Rickettsia bellii (strain RML369-C).